The primary structure comprises 171 residues: Transcriptional repressor NrdR (171 aa).

Residues 1 to 21 (MQCPHCQHTDSRVLESRSSEN) are disordered. The segment at 3 to 34 (CPHCQHTDSRVLESRSSENGQSIRRRRECLQC) is a zinc-finger region. The span at 7–18 (QHTDSRVLESRS) shows a compositional bias: basic and acidic residues. Positions 49-139 (ITVIKKDGKR…VYGNFQGIRD (91 aa)) constitute an ATP-cone domain.

Belongs to the NrdR family. Zn(2+) serves as cofactor.

Functionally, negatively regulates transcription of bacterial ribonucleotide reductase nrd genes and operons by binding to NrdR-boxes. This chain is Transcriptional repressor NrdR, found in Microcystis aeruginosa (strain NIES-843 / IAM M-2473).